The following is a 295-amino-acid chain: uncharacterized protein (295 aa).

Disordered regions lie at residues 33–52 (VDAP…DSHS) and 180–295 (LSKA…AELK). S50 carries the phosphoserine modification. 2 stretches are compositionally biased toward polar residues: residues 205 to 217 (QKNS…SKLI) and 241 to 251 (TSRASVLSQSP). Positions 267–276 (EASEGPEDTP) are enriched in acidic residues. The span at 277 to 289 (ESSQSPEESVSAS) shows a compositional bias: low complexity.

This is an uncharacterized protein from Homo sapiens (Human).